The sequence spans 396 residues: Probable tRNA sulfurtransferase (396 aa).

The region spanning 58-169 (NQFIEKLKMV…KKNIYVFTRS (112 aa)) is the THUMP domain. ATP-binding positions include 187 to 188 (LL), 212 to 213 (YF), Arg269, Gly291, and Gln300.

The protein belongs to the ThiI family.

It localises to the cytoplasm. It catalyses the reaction [ThiI sulfur-carrier protein]-S-sulfanyl-L-cysteine + a uridine in tRNA + 2 reduced [2Fe-2S]-[ferredoxin] + ATP + H(+) = [ThiI sulfur-carrier protein]-L-cysteine + a 4-thiouridine in tRNA + 2 oxidized [2Fe-2S]-[ferredoxin] + AMP + diphosphate. It carries out the reaction [ThiS sulfur-carrier protein]-C-terminal Gly-Gly-AMP + S-sulfanyl-L-cysteinyl-[cysteine desulfurase] + AH2 = [ThiS sulfur-carrier protein]-C-terminal-Gly-aminoethanethioate + L-cysteinyl-[cysteine desulfurase] + A + AMP + 2 H(+). Its pathway is cofactor biosynthesis; thiamine diphosphate biosynthesis. Its function is as follows. Catalyzes the ATP-dependent transfer of a sulfur to tRNA to produce 4-thiouridine in position 8 of tRNAs, which functions as a near-UV photosensor. Also catalyzes the transfer of sulfur to the sulfur carrier protein ThiS, forming ThiS-thiocarboxylate. This is a step in the synthesis of thiazole, in the thiamine biosynthesis pathway. The sulfur is donated as persulfide by IscS. The sequence is that of Probable tRNA sulfurtransferase from Halothermothrix orenii (strain H 168 / OCM 544 / DSM 9562).